Here is a 566-residue protein sequence, read N- to C-terminus: Oxygen-dependent choline dehydrogenase (566 aa).

Residue 7-36 participates in FAD binding; sequence DYIICGAGSAGNVLATRLTEDPNVTVLLLE. Positions 183–203 are disordered; it reads QQEGFGPMDRTVTPKGRRAST. His474 acts as the Proton acceptor in catalysis.

It belongs to the GMC oxidoreductase family. The cofactor is FAD.

It carries out the reaction choline + A = betaine aldehyde + AH2. The enzyme catalyses betaine aldehyde + NAD(+) + H2O = glycine betaine + NADH + 2 H(+). It functions in the pathway amine and polyamine biosynthesis; betaine biosynthesis via choline pathway; betaine aldehyde from choline (cytochrome c reductase route): step 1/1. In terms of biological role, involved in the biosynthesis of the osmoprotectant glycine betaine. Catalyzes the oxidation of choline to betaine aldehyde and betaine aldehyde to glycine betaine at the same rate. This chain is Oxygen-dependent choline dehydrogenase, found in Burkholderia ambifaria (strain ATCC BAA-244 / DSM 16087 / CCUG 44356 / LMG 19182 / AMMD) (Burkholderia cepacia (strain AMMD)).